The primary structure comprises 70 residues: Large ribosomal subunit protein bL31 (70 aa).

Residues cysteine 16, cysteine 18, cysteine 37, and cysteine 40 each contribute to the Zn(2+) site.

This sequence belongs to the bacterial ribosomal protein bL31 family. Type A subfamily. Part of the 50S ribosomal subunit. The cofactor is Zn(2+).

Functionally, binds the 23S rRNA. This is Large ribosomal subunit protein bL31 from Erwinia tasmaniensis (strain DSM 17950 / CFBP 7177 / CIP 109463 / NCPPB 4357 / Et1/99).